The sequence spans 532 residues: Berberine bridge enzyme-like 23 (532 aa).

Residues 1 to 22 form the signal peptide; sequence MRTLEAFALSLFLVFLVKWVNS. Cysteines 36 and 102 form a disulfide. A glycan (N-linked (GlcNAc...) asparagine) is linked at N78. The 177-residue stretch at 80-256 folds into the FAD-binding PCMH-type domain; the sequence is TSQKPILIVT…LSWKVKLVRV (177 aa). The segment at residues 117 to 180 is a cross-link (6-(S-cysteinyl)-8alpha-(pros-histidyl)-FAD (His-Cys)); sequence HDYEGLSYLS…KIHGFPAGTC (64 aa). Residues N272 and N487 are each glycosylated (N-linked (GlcNAc...) asparagine).

The protein belongs to the oxygen-dependent FAD-linked oxidoreductase family. FAD is required as a cofactor. Post-translationally, the FAD cofactor is bound via a bicovalent 6-S-cysteinyl, 8alpha-N1-histidyl FAD linkage. Accumulates in cell walls of etiolated hypocotyls.

The protein localises to the secreted. The protein resides in the cell wall. The polypeptide is Berberine bridge enzyme-like 23 (Arabidopsis thaliana (Mouse-ear cress)).